The chain runs to 306 residues: Glutaminase (306 aa).

Substrate-binding residues include Ser-64, Asn-115, Glu-159, Asn-166, Tyr-190, Tyr-242, and Val-260.

The protein belongs to the glutaminase family. As to quaternary structure, homotetramer.

It carries out the reaction L-glutamine + H2O = L-glutamate + NH4(+). In Aliivibrio salmonicida (strain LFI1238) (Vibrio salmonicida (strain LFI1238)), this protein is Glutaminase.